The sequence spans 5495 residues: Microtubule-associated protein futsch (5495 aa).

Disordered stretches follow at residues 1 to 97 (MGDQ…DADG), 656 to 975 (AKAD…LKEE), 988 to 1074 (RDEM…AEEE), 1086 to 1111 (ERKARLEGASARQDESELDVEPEQSK), 1128 to 1167 (KSRTEEQLAKPAEEELSSPTPEEKLSKKTSDTKDDQIGAP), 1185 to 1204 (SATIESGATTAPTLPEDERI), 1255 to 1275 (KDAPKDANAEALGELPDSGER), 1306 to 1358 (HEEA…EPNK), 1402 to 1840 (NQED…VVES), 1866 to 2631 (EIGK…PGFV), 2709 to 2810 (AKTV…KDFA), 2830 to 4166 (LPTL…DLSL), 4196 to 4230 (KAESSPRPAVLSKPAEFSQPDTGHTASTPVDEASP), 4362 to 4612 (IIPD…ASQL), 4636 to 4668 (AQKSNKEIKDARETKVTSQFTTTTSSATKDDSL), 4687 to 4975 (AFST…QMLA), 5035 to 5065 (KTVTTTDSSEPDSEKVVVTTTRTTSESERDQ), 5101 to 5138 (SYELQHSSSGVSKRSDLDADGDESQDDIPPQYGSEEHS), 5170 to 5199 (PSTEPIPIQGAPSGDSQSSESVESSSQTWA), and 5328 to 5350 (GLPSPAPLPVEGGADIRTTPKKE). The segment covering 35-48 (AKGAGDGPAQDAAQ) has biased composition (low complexity). 3 stretches are compositionally biased toward basic and acidic residues: residues 656 to 672 (AKADSMDTDAEPEHEAD), 696 to 716 (EPEHEPEAEQDKDVGEEKKVE), and 758 to 795 (GKADKPRAEVKPVVRSRIDTKPPKSMDRKLAKRDEKKS). Low complexity-rich tracts occupy residues 797 to 806 (PTTTPAARAP) and 819 to 831 (PATKSSPSSTPAK). Residues 832–843 (SAKEANNRKVLE) are compositionally biased toward basic and acidic residues. A compositionally biased stretch (low complexity) spans 850–888 (RVQATSTVSRRVTSTASERRVQQQAEAKTAATGATQATQ). Residues 918–931 (KAADLKKTRLDKGG) are compositionally biased toward basic and acidic residues. Residues 932–942 (TTDSSLVSTPS) are compositionally biased toward polar residues. Composition is skewed to basic and acidic residues over residues 962–975 (DAEKQRELDDLKEE) and 988–1007 (RDEMKRQQHQQIKAELREMP). A compositionally biased stretch (acidic residues) spans 1012 to 1041 (GDGENEPDEEEEYLIIEKEEVEQYTEDSIV). Over residues 1047-1065 (MTKEEEIQKHQRDSQESEK) the composition is skewed to basic and acidic residues. 2 stretches are compositionally biased toward basic and acidic residues: residues 1128–1140 (KSRTEEQLAKPAE) and 1148–1163 (PEEKLSKKTSDTKDDQ). Residues 1187–1196 (TIESGATTAP) are compositionally biased toward polar residues. 4 stretches are compositionally biased toward basic and acidic residues: residues 1306-1319 (HEEADLGLYEKDSQ), 1327-1337 (SHKEESAKEEK), 1343-1358 (KENKVGEIELGDEPNK), and 1408-1443 (EQVKDKEEHEQKIESGIITEKEAKKSASTPEEKETS). Tandem repeats lie at residues 1469 to 1502 (REDTGSIESPPTIEEAIEVEVQAKQEAQKPVPAP) and 1513 to 1539 (LASKETSRPESATGSVKEDTEQTKSKK). The tract at residues 1469–4032 (REDTGSIESP…SPLASKESSR (2564 aa)) is 53 X approximate repeat. 5 stretches are compositionally biased toward basic and acidic residues: residues 1546 to 1555 (PESEAKDKKS), 1571 to 1663 (SVKD…DEKS), 1679 to 1696 (SVKDETEKSKEPSRRESI), 1718 to 1732 (GIKDESAKPESRRDS), and 1748 to 1779 (SVKDEPIKSTEKSRRESVAESFKADSTKDEKS). 17 tandem repeats follow at residues 1622–1649 (KSALASKEASRPESVTDKSKEPSRRESI), 1660–1686 (DEKSAPPSKEASRPGSVVESVKDETEK), 1690–1718 (PSRRESIAESAKPPIEFREVSRPESVIDG), 1755–1782 (KSTEKSRRESVAESFKADSTKDEKSPLT), 1790–1818 (ESAVENVMDAVGSAERSQPESVTASRDVS), 1837–1865 (VVESVIPASDVVEIEKGAADKEKGVFVSL), 1874–1902 (SEVISRPGPVVESVKPESRRESSTEIVLP), 1911–1939 (PSRPESKVECLKDESEVLKGSTRRESVAE), 1948–1976 (KETSRPESAVGSMKDESMSKEPSRRESVK), 1985–2013 (TSRPASVAESAKDGADDLKELSRPESTTQ), 2022–2050 (DEKSPLASEEASRPASVAESVKDEAEKSK), 2059–2087 (AEKSPLPSKEASRPASVAESIKDEAEKSK), 2096–2124 (AEKSPLPSKEASRPASVAESIKDEAEKSK), 2133–2161 (AEKSPLPSKEASRPASVAESIKDEAEKSK), 2170–2198 (AEKSPLPSKEASRPASVAESIKDEAEKSK), 2215–2243 (KEASRPASVAESIKDEAEKSKEESRRESV), and 2262–2292 (ESIKDEAEKSKEESRRESVAEKSPLPSKEAS). The segment covering 1804–1815 (ERSQPESVTASR) has biased composition (polar residues). Basic and acidic residues-rich tracts occupy residues 1887–1896 (VKPESRRESS), 1904–1942 (HAEDSKEPSRPESKVECLKDESEVLKGSTRRESVAESDK), 1960–1976 (MKDESMSKEPSRRESVK), 1994–2007 (SAKDGADDLKELSR), 2041–2059 (SVKDEAEKSKEESRRESVA), 2078–2096 (SIKDEAEKSKEESRRESVA), 2115–2133 (SIKDEAEKSKEESRRESVA), 2152–2170 (SIKDEAEKSKEESRRESVA), 2189–2207 (SIKDEAEKSKEESRRESVA), 2226–2244 (SIKDEAEKSKEESRRESVA), 2263–2281 (SIKDEAEKSKEESRRESVA), 2300–2318 (SIKDEAEKSKEETRRESVA), 2337–2355 (SIKDEAEKSKEESRRESAA), 2374–2391 (SVKDEADKSKEESRRESM), 2419–2435 (SVKDDPVKSKEPSRRES), 2466–2482 (SVKDEAEKQESRRESKT), 2560–2588 (IKYDLDKPQIIKDDKSTEHSRRESLEDKS), and 2604–2627 (SDHEAAVAIEDDAKSSISPKDKSR). The stretch at 2355–2391 (AEKSPLPSKEASRPASVAESVKDEADKSKEESRRESM) is repeat 20. Tandem repeats lie at residues 2703 to 2726 (LAQIGAAKTVSSPLDEALRTPSAP) and 2761 to 2787 (WVAESKDDAAQLKSSVEDLRSPVASTE). Residues 2764–2780 (ESKDDAAQLKSSVEDLR) show a composition bias toward basic and acidic residues. S2800 bears the Phosphoserine; by GSK3-beta mark. Repeat copies occupy residues 2820–2846 (LPLTIELKGNLPTLSSPVDVAHGDFPQ), 2864–2892 (LSKVDIEKTASSPIDEAPKSLIGCPAEER), and 2907–2933 (VEKSKDASRPPSVVESTKADSTKGDIS). Over residues 2845 to 2861 (PQTSTPTSSPTVASVQP) the composition is skewed to low complexity. 2 stretches are compositionally biased toward basic and acidic residues: residues 2889–2914 (AEERPESPAESAKDAAESVEKSKDAS) and 2942–2954 (GPKDDVEKSKESS). Residues 2955–2966 (RPPSVSASITGD) show a composition bias toward polar residues. 28 consecutive repeat copies span residues 2956–2987 (PPSVSASITGDSTKDVSRPASVVESVKDEHDK), 3006–3034 (GKSDSKSSSQDSQKDEKSTLASKEASRRE), 3049–3075 (SRPESVIASGEPVPRESKSPLDSKDTS), 3089–3117 (EKSEQQSRRESVAESVKADTKKDGKSQEA), 3131–3158 (DEKQESRRQSITGSHKAMSTMGDESPMD), 3200–3224 (KSDITKGEKSPLPSKEVSRPESVVG), 3228–3256 (DEKAESRRESVAESVKPESSKDATSAPPS), 3265–3293 (VLGSLKDEGDKTTSRRVSVADSIKDEKSL), 3302–3330 (PESEAESLKDAAAPSQETSRPESVTESVK), 3339–3367 (KEASRPASVAENAKDSADESKEQRPESLP), 3376–3404 (DEKSPLASKDEAEKSKEESRRESVAEQFP), 3413–3441 (PASVAESVKDEAEKSKEESPLMSKEASRP), 3450–3478 (DEAEKSKEESRRESVAEKSPLPSKEASRP), 3487–3515 (DEADKSKEESRRESGAEKSPLASKEASRP), 3524–3552 (DEAEKSKEESRRESVAEKSPLPSKEASRP), 3561–3589 (DEAEKSKEESRRDSVAEKSPLASKEASRP), 3598–3626 (DEAEKSKEESRRESVAEKSPLASKEASRP), 3635–3663 (DEAEKSKEESRRESVAEKSPLASKEASRP), 3672–3700 (DEAEKSKEESSRDSVAEKSPLASKEASRP), 3709–3737 (DEAEKSKEESRRESVAEKSPLASKEASRP), 3746–3774 (DDAEKSKEESRRESVAEKSPLASKEASRP), 3783–3811 (DEAEKSKEESRRESVAEKSPLPSKEASRP), 3820–3848 (DEAEKSKEESRRESVAEKSSLASKKASRP), 3867–3894 (RRESVAEKSPLASKEASRPASVAESVKD), 3895–3921 (EAEKSKEESRRESVAEKSPLPSKEASR), 3931–3958 (DEADKSKEESRRESGAEKSPLASMEASR), 3968–3995 (DETEKSKEESRRESVTEKSPLPSKEASR), and 4005–4032 (DEAEKSKEESRRESVAEKSPLASKESSR). Composition is skewed to basic and acidic residues over residues 2980–2996 (SVKDEHDKAESRRESIA), 3017–3051 (SQKDEKSTLASKEASRRESVVESSKDDAEKSESRP), 3061–3075 (VPRESKSPLDSKDTS), 3087–3116 (EDEKSEQQSRRESVAESVKADTKKDGKSQE), 3156–3168 (PMDKADKSKEPSR), 3175–3208 (SIKHENTKDEESPLGSRRDSVAESIKSDITKGEK), and 3226–3248 (IKDEKAESRRESVAESVKPESSK). S3067, S3071, and S3075 each carry phosphoserine. The segment covering 3300 to 3310 (SRPESEAESLK) has biased composition (basic and acidic residues). Positions 3316 to 3327 (SQETSRPESVTE) are enriched in polar residues. Basic and acidic residues-rich tracts occupy residues 3350–3363 (NAKDSADESKEQRP), 3373–3399 (SIKDEKSPLASKDEAEKSKEESRRESV), 3419–3431 (SVKDEAEKSKEES), 3448–3465 (VKDEAEKSKEESRRESVA), 3484–3502 (SVKDEADKSKEESRRESGA), 3521–3539 (SIKDEAEKSKEESRRESVA), 3558–3576 (SVKDEAEKSKEESRRDSVA), 3599–3613 (EAEKSKEESRRESVA), 3632–3650 (SIKDEAEKSKEESRRESVA), 3669–3687 (SVKDEAEKSKEESSRDSVA), 3710–3724 (EAEKSKEESRRESVA), 3743–3761 (SVKDDAEKSKEESRRESVA), 3780–3798 (SVKDEAEKSKEESRRESVA), and 3817–3835 (SVKDEAEKSKEESRRESVA). The span at 3836–3850 (EKSSLASKKASRPAS) shows a compositional bias: low complexity. Basic and acidic residues-rich tracts occupy residues 3854–3872 (SVKDEAEKSKEESRRESVA), 3891–3909 (SVKDEAEKSKEESRRESVA), 3928–3946 (SVKDEADKSKEESRRESGA), 3965–3983 (SVKDETEKSKEESRRESVT), 4002–4020 (SVKDEAEKSKEESRRESVA), 4039–4066 (SIKDEAEGTKQESRRESMPESGKAESIK), 4086–4095 (SVKDETEKPE), and 4115–4141 (AKDEKSPLHSRPESVADKSPDASKEAS). 2 stretches are compositionally biased toward polar residues: residues 4142–4152 (RSLSVAETASS) and 4214–4223 (QPDTGHTAST). Composition is skewed to basic and acidic residues over residues 4362 to 4379 (IIPDFDERQLEEKLKSTA), 4386 to 4410 (DKSTRDEKSLEISVKVEIESEKSSP), and 4419 to 4432 (IEEKDKIEQSEKAQ). The segment covering 4443–4461 (PESVASQPESVPSPSQSAA) has biased composition (low complexity). Over residues 4462 to 4481 (SHEHKEVELSESHKAEKSSR) the composition is skewed to basic and acidic residues. A compositionally biased stretch (polar residues) spans 4498-4508 (RPASSTSQFST). The span at 4517-4528 (ESLLHSLTTTET) shows a compositional bias: low complexity. Positions 4529 to 4539 (VETKQMEEKSS) are enriched in basic and acidic residues. Positions 4540 to 4560 (FESVSTSVTKSTVLSSQSTVQ) are enriched in low complexity. Composition is skewed to basic and acidic residues over residues 4575–4584 (KVEDSSRRES) and 4639–4650 (SNKEIKDARETK). Composition is skewed to low complexity over residues 4651-4662 (VTSQFTTTTSSA) and 4703-4714 (TTASAVSSTSAS). A compositionally biased stretch (acidic residues) spans 4744–4754 (PEDEEPADDVD). Basic and acidic residues-rich tracts occupy residues 4755-4764 (ERSSVKESRS) and 4788-4798 (LVEEEHEHVEE). The span at 4804–4829 (TSTSKTTTLLQSSEQSSTTTSSTSKT) shows a compositional bias: low complexity. Polar residues predominate over residues 4835–4851 (ESITLTQMDQQTSQSQG). The span at 4875 to 4905 (GSAGSVIGAGAGAVAAGGKCESSAASIVSSS) shows a compositional bias: low complexity. The span at 4915–4930 (GKSSPGALTSESQSIP) shows a compositional bias: polar residues. S4950 bears the Phosphoserine; by GSK3-beta mark. Over residues 4955–4970 (VSKDELKSLEMQHHSQ) the composition is skewed to basic and acidic residues. The span at 5101–5112 (SYELQHSSSGVS) shows a compositional bias: polar residues. Positions 5185–5196 (SQSSESVESSSQ) are enriched in low complexity.

As to quaternary structure, heterodimer of a heavy and a light chain. Interacts with Fmr1. Found in a complex with tubulin and Futsch. Several minor light chains can be created with markedly different pIs. Post-translationally, phosphorylated by SGG/GSK3. Phosphorylated by LRRK2 at the presynapse of neuromuscular junctions, which negatively regulates the activity controlling synaptic differentiation. In terms of tissue distribution, neuronal cells within the PNS and CNS.

It is found in the cytoplasm. The protein localises to the cytoskeleton. During embryogenesis, necessary for dendritic and axonal organization and growth at the neuromuscular junction through the regulation of the synaptic microtubule cytoskeleton. Microtubule hairpin loops are found within a small subset of synaptic boutons at the neuromuscular synapse, these loops are stabilized by futsch. Loop morphology and dynamics suggest that rearrangement of these microtubule-based loops is a critical component of the process of bouton division and for subsequent nerve-terminal growth and branching. Translation is repressed by Fmr1. Together with ringer, required for neuromuscular junction (NMJ) bouton growth by regulating synaptic microtubules. Function with ringer in maintaining microtubule stability and dynamics, is essential for promoting axon regeneration in response to peripheral (PNS) and central nervous system (CNS) injury. In response to axotomy, acts downstream of a stress response cascade involving Xbp1 splicing, to control axon regeneration. The polypeptide is Microtubule-associated protein futsch (futsch) (Drosophila melanogaster (Fruit fly)).